The following is a 122-amino-acid chain: uncharacterized protein (122 aa).

The signal sequence occupies residues 1 to 33; sequence MASTVAGLSMSAESLRLPLLIGVSSGMLSVSDA.

This is an uncharacterized protein from Saccharomyces cerevisiae (strain ATCC 204508 / S288c) (Baker's yeast).